Consider the following 178-residue polypeptide: Thymidine kinase (178 aa).

13 to 20 contacts ATP; the sequence is GPMFAGKS. Catalysis depends on glutamate 85, which acts as the Proton acceptor. A substrate-binding site is contributed by phenylalanine 115. Zn(2+) is bound by residues cysteine 140 and cysteine 143. Residue 159-163 coordinates substrate; it reads IEIIG. The Zn(2+) site is built by cysteine 172 and cysteine 175.

Belongs to the thymidine kinase family.

The catalysed reaction is thymidine + ATP = dTMP + ADP + H(+). The polypeptide is Thymidine kinase (TK) (Myxoma virus (strain Lausanne) (MYXV)).